The chain runs to 390 residues: Putative nickel insertion protein (390 aa).

This sequence belongs to the LarC family.

This Myxococcus xanthus (strain DK1622) protein is Putative nickel insertion protein.